The sequence spans 442 residues: tRNA modification GTPase MnmE (442 aa).

(6S)-5-formyl-5,6,7,8-tetrahydrofolate-binding residues include Arg21, Glu79, and Lys118. Residues 214 to 367 (GFKIAIVGKP…LKEELQNYLN (154 aa)) form the TrmE-type G domain. Asn224 contributes to the K(+) binding site. Residues 224–229 (NVGKSS), 243–249 (SDIAGTT), and 268–271 (DTAG) each bind GTP. Position 228 (Ser228) interacts with Mg(2+). K(+) contacts are provided by Ser243, Ile245, and Thr248. Mg(2+) is bound at residue Thr249. Lys442 contacts (6S)-5-formyl-5,6,7,8-tetrahydrofolate.

Belongs to the TRAFAC class TrmE-Era-EngA-EngB-Septin-like GTPase superfamily. TrmE GTPase family. As to quaternary structure, homodimer. Heterotetramer of two MnmE and two MnmG subunits. Requires K(+) as cofactor.

Its subcellular location is the cytoplasm. In terms of biological role, exhibits a very high intrinsic GTPase hydrolysis rate. Involved in the addition of a carboxymethylaminomethyl (cmnm) group at the wobble position (U34) of certain tRNAs, forming tRNA-cmnm(5)s(2)U34. The polypeptide is tRNA modification GTPase MnmE (Campylobacter jejuni subsp. jejuni serotype O:2 (strain ATCC 700819 / NCTC 11168)).